Here is a 156-residue protein sequence, read N- to C-terminus: Small ribosomal subunit protein uS7 (156 aa).

Belongs to the universal ribosomal protein uS7 family. Part of the 30S ribosomal subunit. Contacts proteins S9 and S11.

One of the primary rRNA binding proteins, it binds directly to 16S rRNA where it nucleates assembly of the head domain of the 30S subunit. Is located at the subunit interface close to the decoding center, probably blocks exit of the E-site tRNA. This Campylobacter concisus (strain 13826) protein is Small ribosomal subunit protein uS7.